The primary structure comprises 453 residues: MSKEEIWDKVLELAKNELTPISYSTWFEPPKTELIDIQENTAIILVESNFVQDFLKKQYTDIIADLIEKAIGTKLMPNFVIQEDLTEDKQVKDSAKAKSEAKPDVQAPQNSSEDQFNVHNTFETFVIGPGNRFPHAASLAVAEAPAKAYNPLFIYGGVGLGKTHLMHAIGHYVLENNRDAKVIYTSSEKFTNEFIKSIRDNETEQFREKYRNIDVLLIDDIQFIQNKEQTQEEFFHTFNDLHQTGKQIVISSDRPPKEIAKLEDRLRSRFEWGLIVDITPPDYETRMAILQKKLEEEDVDIPLESLTYIANQIQSNIRELEGALTRVIAYSRLQNEAITTELTAEALKDIIQTPKSKKITIQDIQKVVGQYYNVRLEDFAAKKRTKSIAYPRQIAMYLSRELTDFSLPKIGEEFGGRDHTTVIHAHMKIQTDMSEDPIFKQEVENLEKEIRNQ.

The tract at residues 1–73 (MSKEEIWDKV…ADLIEKAIGT (73 aa)) is domain I, interacts with DnaA modulators. Positions 73–114 (TKLMPNFVIQEDLTEDKQVKDSAKAKSEAKPDVQAPQNSSED) are domain II. A compositionally biased stretch (basic and acidic residues) spans 91-103 (VKDSAKAKSEAKP). Residues 91-113 (VKDSAKAKSEAKPDVQAPQNSSE) form a disordered region. The segment at 115–331 (QFNVHNTFET…GALTRVIAYS (217 aa)) is domain III, AAA+ region. 4 residues coordinate ATP: glycine 159, glycine 161, lysine 162, and threonine 163. Residues 332-453 (RLQNEAITTE…ENLEKEIRNQ (122 aa)) form a domain IV, binds dsDNA region.

Belongs to the DnaA family. As to quaternary structure, oligomerizes as a right-handed, spiral filament on DNA at oriC.

It localises to the cytoplasm. Plays an essential role in the initiation and regulation of chromosomal replication. ATP-DnaA binds to the origin of replication (oriC) to initiate formation of the DNA replication initiation complex once per cell cycle. Binds the DnaA box (a 9 base pair repeat at the origin) and separates the double-stranded (ds)DNA. Forms a right-handed helical filament on oriC DNA; dsDNA binds to the exterior of the filament while single-stranded (ss)DNA is stabiized in the filament's interior. The ATP-DnaA-oriC complex binds and stabilizes one strand of the AT-rich DNA unwinding element (DUE), permitting loading of DNA polymerase. After initiation quickly degrades to an ADP-DnaA complex that is not apt for DNA replication. Binds acidic phospholipids. This Staphylococcus carnosus (strain TM300) protein is Chromosomal replication initiator protein DnaA.